The following is a 421-amino-acid chain: Threonine--tRNA ligase editing subunit (421 aa).

The protein belongs to the class-II aminoacyl-tRNA synthetase family. Archaea-specific ThrRS editing domain subfamily. In terms of assembly, probably interacts with its catalytic subunit.

It is found in the cytoplasm. Functionally, freestanding tRNA editing subunit of threonine--tRNA ligase, the catalytic subunit is probably AC Q9YDW0. Deacylates (edits) mischarged L-seryl-tRNA(Thr) in trans; has no activity on correctly charged L-threonyl-tRNA(Thr). Probably does not aminoacylate tRNA(Thr). Deacylates correctly charged glycyl-tRNA(Gly), but not glycyl-tRNA(Gly)(2'-dA76) (the terminal 2'-OH of tRNA adenine 76 has been dehydroxylated) nor the 2'-fluoro tRNA derivative, strongly suggesting the editing function is catalyzed by the 2'-OH of A76 of tRNA(Thr). This chain is Threonine--tRNA ligase editing subunit (thrS2), found in Aeropyrum pernix (strain ATCC 700893 / DSM 11879 / JCM 9820 / NBRC 100138 / K1).